The following is a 355-amino-acid chain: Guanine nucleotide-binding protein alpha-12 subunit (355 aa).

In terms of domain architecture, G-alpha spans 28 to 355 (RQINLLLLGS…EQNLKTLMMQ (328 aa)). The interval 31 to 44 (NLLLLGSGESGKST) is G1 motif. GTP contacts are provided by residues 36-43 (GSGESGKS), 176-182 (LFCRKAT), 201-205 (DVGGQ), 270-273 (NKND), and alanine 327. 2 residues coordinate Mg(2+): serine 43 and threonine 182. Residues 174–182 (DILFCRKAT) form a G2 motif region. The interval 197–206 (FRFIDVGGQR) is G3 motif. Residues 266-273 (ILFMNKND) form a G4 motif region. Positions 325 to 330 (TTAVDT) are G5 motif.

It belongs to the G-alpha family. As to quaternary structure, g proteins are composed of 3 units; alpha, beta and gamma. The alpha chain contains the guanine nucleotide binding site.

Guanine nucleotide-binding proteins (G proteins) are involved as modulators or transducers in various transmembrane signaling systems. May play a role in resistance to fungal infection in the epidermis by regulating the up-regulation of several antimicrobial peptides of the NLP and CNC families. Upstream of plc-3, tpa-1 and the p38-like pathway, required for the expression of antimicrobial peptide nlp-29 in the epidermis in response to fungal infection or physical injury. The chain is Guanine nucleotide-binding protein alpha-12 subunit (gpa-12) from Caenorhabditis elegans.